Reading from the N-terminus, the 81-residue chain is Cytochrome c6 (81 aa).

Heme c contacts are provided by C10, C13, H14, and M54.

Belongs to the cytochrome c family. PetJ subfamily. Monomer. Binds 1 heme c group covalently per subunit.

Its subcellular location is the cellular thylakoid lumen. In terms of biological role, functions as an electron carrier between membrane-bound cytochrome b6-f and photosystem I in oxygenic photosynthesis. This is Cytochrome c6 (petJ) from Microcystis aeruginosa.